Consider the following 367-residue polypeptide: Phospho-N-acetylmuramoyl-pentapeptide-transferase (367 aa).

Helical transmembrane passes span 13 to 33 (ISGI…ALTL), 49 to 69 (LPLL…VPLL), 95 to 115 (MGGI…SNFA), 119 to 139 (LAVS…DWQI), 154 to 174 (LALQ…NQPA), 183 to 203 (WVSF…FVLV), 215 to 235 (IDGL…AIVA), 237 to 257 (TSPA…GFLA), 281 to 301 (AVAL…IFFV), and 347 to 367 (VSSF…IAPF).

The protein belongs to the glycosyltransferase 4 family. MraY subfamily. Mg(2+) is required as a cofactor.

It localises to the cell inner membrane. It catalyses the reaction UDP-N-acetyl-alpha-D-muramoyl-L-alanyl-gamma-D-glutamyl-meso-2,6-diaminopimeloyl-D-alanyl-D-alanine + di-trans,octa-cis-undecaprenyl phosphate = di-trans,octa-cis-undecaprenyl diphospho-N-acetyl-alpha-D-muramoyl-L-alanyl-D-glutamyl-meso-2,6-diaminopimeloyl-D-alanyl-D-alanine + UMP. The protein operates within cell wall biogenesis; peptidoglycan biosynthesis. Functionally, catalyzes the initial step of the lipid cycle reactions in the biosynthesis of the cell wall peptidoglycan: transfers peptidoglycan precursor phospho-MurNAc-pentapeptide from UDP-MurNAc-pentapeptide onto the lipid carrier undecaprenyl phosphate, yielding undecaprenyl-pyrophosphoryl-MurNAc-pentapeptide, known as lipid I. The chain is Phospho-N-acetylmuramoyl-pentapeptide-transferase from Trichormus variabilis (strain ATCC 29413 / PCC 7937) (Anabaena variabilis).